Consider the following 156-residue polypeptide: Succinate dehydrogenase [ubiquinone] cytochrome b small subunit 1, mitochondrial (156 aa).

A mitochondrion-targeting transit peptide spans Met-1–Ala-25. Topologically, residues Gly-26–Phe-59 are mitochondrial matrix. Residues Lys-60–Phe-78 form a helical membrane-spanning segment. Topologically, residues Ile-79–Glu-83 are mitochondrial intermembrane. Residues Met-84–Val-104 traverse the membrane as a helical segment. A heme b-binding site is contributed by His-95. At Asn-105–Ala-119 the chain is on the mitochondrial matrix side. Tyr-107 is an a rhodoquinol binding site. Residues Ala-120–Glu-141 traverse the membrane as a helical segment. Over His-142–Leu-156 the chain is Mitochondrial intermembrane.

Belongs to the CybS family. Component of the mitochondrial electron transport chain complex II composed of four subunits: a flavoprotein (Fp), an iron-sulfur protein (Ip), and a large cytochrome b (CybL) subunit and a small cytochrome b (CybS) subunit. There are 2 developmental stage-specific forms of complex II which have the Ip and CybL subunits in common. Complex II from the free-living larvae (aerobic environment) acts as a succinate dehydrogenase and is composed of the common subunit Ip and CybL and the stage specific subunits FpL and CybSL. Complex II from parasitic larvae and adults (anaerobic environment) acts as a fumarate reductase and is composed of the common subunit Ip and CybL and the stage specific subunits FpA and CybSA. Heme b is required as a cofactor. In terms of tissue distribution, expressed in adult muscles (at protein level).

The protein resides in the mitochondrion inner membrane. Functionally, membrane-bound small subunit (CybS) of the mitochondrial electron transport chain complex II, which together with the membrane-bound large subunit (CybL), anchor the catalytic subunits to the inner mitochondria membrane. During the parasitic larvae and adult stages, which occur in an anaerobic environment, complex II acts as a fumarate reductase by transferring electrons from rhodoquinol to fumarate. The chain is Succinate dehydrogenase [ubiquinone] cytochrome b small subunit 1, mitochondrial from Ascaris suum (Pig roundworm).